A 309-amino-acid polypeptide reads, in one-letter code: D-alanine--D-alanine ligase (309 aa).

The ATP-grasp domain maps to 99–304 (KRVLLQAGIP…FPDLVQKIVD (206 aa)). 132 to 187 (LKELGLPVVIKAPTQGSTIGTFIVREEGELEPAIAGALKYDLSFMAEAYLAGPEIT) contributes to the ATP binding site. Mg(2+)-binding residues include D258, E271, and N273.

Belongs to the D-alanine--D-alanine ligase family. The cofactor is Mg(2+). Mn(2+) is required as a cofactor.

Its subcellular location is the cytoplasm. The enzyme catalyses 2 D-alanine + ATP = D-alanyl-D-alanine + ADP + phosphate + H(+). Its pathway is cell wall biogenesis; peptidoglycan biosynthesis. Its function is as follows. Cell wall formation. This chain is D-alanine--D-alanine ligase, found in Moorella thermoacetica (strain ATCC 39073 / JCM 9320).